Reading from the N-terminus, the 64-residue chain is Small ribosomal subunit protein bS21 (64 aa).

This sequence belongs to the bacterial ribosomal protein bS21 family.

The chain is Small ribosomal subunit protein bS21 from Neorickettsia sennetsu (strain ATCC VR-367 / Miyayama) (Ehrlichia sennetsu).